The primary structure comprises 216 residues: Probable nicotinate-nucleotide adenylyltransferase (216 aa).

Belongs to the NadD family.

The enzyme catalyses nicotinate beta-D-ribonucleotide + ATP + H(+) = deamido-NAD(+) + diphosphate. Its pathway is cofactor biosynthesis; NAD(+) biosynthesis; deamido-NAD(+) from nicotinate D-ribonucleotide: step 1/1. Its function is as follows. Catalyzes the reversible adenylation of nicotinate mononucleotide (NaMN) to nicotinic acid adenine dinucleotide (NaAD). The sequence is that of Probable nicotinate-nucleotide adenylyltransferase from Marinobacter nauticus (strain ATCC 700491 / DSM 11845 / VT8) (Marinobacter aquaeolei).